The primary structure comprises 712 residues: Glycine--tRNA ligase beta subunit (712 aa).

It belongs to the class-II aminoacyl-tRNA synthetase family. As to quaternary structure, tetramer of two alpha and two beta subunits.

The protein resides in the cytoplasm. The enzyme catalyses tRNA(Gly) + glycine + ATP = glycyl-tRNA(Gly) + AMP + diphosphate. The polypeptide is Glycine--tRNA ligase beta subunit (Acaryochloris marina (strain MBIC 11017)).